The primary structure comprises 359 residues: MARKPALSPEEARAEALGTALATIERKYGKGAVMKLSDDAHVNIPVIPTGSIGLDLALGVGGIPRGRISEIFGPESSGKTTLTLHIIAECQRLGGTCAFVDAEHALDVSYARRLGVNTDELLISQPDYGEQALDIADMLVRSGAVDLVVVDSVAALIPQAELEGDMGETQVGGHARLMSHAMRRLTGTIHKSRTSVIFINQIRMKIGVTGYGSPETTTGGNALKFYSSVRLDIRRIQTLKDKEESFGSRTRVKVVKNKVAPPFRSAVFDILYGLGISRAGELLDLGIEAKIIDQSGSWFAFGAEKLGQGREKVRALLDENIDLRNQIEAKVVEFLGLHPREFTPTAEDIAESQDPVLED.

73–80 (GPESSGKT) is a binding site for ATP.

Belongs to the RecA family.

It is found in the cytoplasm. In terms of biological role, can catalyze the hydrolysis of ATP in the presence of single-stranded DNA, the ATP-dependent uptake of single-stranded DNA by duplex DNA, and the ATP-dependent hybridization of homologous single-stranded DNAs. It interacts with LexA causing its activation and leading to its autocatalytic cleavage. This chain is Protein RecA, found in Desulfovibrio desulfuricans (strain ATCC 27774 / DSM 6949 / MB).